We begin with the raw amino-acid sequence, 320 residues long: N-acetylneuraminate lyase (320 aa).

Aceneuramate is bound by residues Thr-51 and Thr-52. Tyr-143 functions as the Proton donor in the catalytic mechanism. The active-site Schiff-base intermediate with substrate is Lys-173. Residues Ser-175, Gly-199, Asp-201, Glu-202, and Ser-218 each contribute to the aceneuramate site.

This sequence belongs to the DapA family. NanA subfamily. Homotetramer. In terms of tissue distribution, isoform 2 is expressed in placenta, liver, kidney, pancreas, spleen, thymus, ovary, small intestine and peripheral blood leukocyte.

The protein localises to the cytoplasm. The catalysed reaction is aceneuramate = aldehydo-N-acetyl-D-mannosamine + pyruvate. It functions in the pathway amino-sugar metabolism; N-acetylneuraminate degradation. Catalyzes the cleavage of N-acetylneuraminic acid (sialic acid) to form pyruvate and N-acetylmannosamine via a Schiff base intermediate. It prevents sialic acids from being recycled and returning to the cell surface. Involved in the N-glycolylneuraminic acid (Neu5Gc) degradation pathway. Although human is not able to catalyze formation of Neu5Gc due to the inactive CMAHP enzyme, Neu5Gc is present in food and must be degraded. The chain is N-acetylneuraminate lyase from Homo sapiens (Human).